The chain runs to 601 residues: Polypeptide N-acetylgalactosaminyltransferase 11 (601 aa).

The Cytoplasmic segment spans residues 1–7 (MGSAALR). Residues 8 to 28 (CFCYGCLFTSVTWTLLLFIYF) form a helical; Signal-anchor for type II membrane protein membrane-spanning segment. N-linked (GlcNAc...) asparagine glycosylation is found at Asn29 and Asn202. Residues 29 to 601 (NFSEESQGFR…SPSQQWHLEN (573 aa)) are Lumenal-facing. Positions 143-254 (LPMASIVICF…EMWLQPLLAP (112 aa)) are catalytic subdomain A. A catalytic subdomain B region spans residues 312 to 374 (PFRSPTMAGG…PCSRVGHIFR (63 aa)). The Ricin B-type lectin domain occupies 469–600 (RPKILQRGRL…GSPSQQWHLE (132 aa)). Cysteines 486 and 505 form a disulfide. Asn508 carries an N-linked (GlcNAc...) asparagine glycan. Cystine bridges form between Cys529/Cys546 and Cys571/Cys589.

It belongs to the glycosyltransferase 2 family. GalNAc-T subfamily. As to quaternary structure, interacts with notch1. It depends on Mn(2+) as a cofactor. Ca(2+) is required as a cofactor.

It is found in the golgi apparatus membrane. The enzyme catalyses L-seryl-[protein] + UDP-N-acetyl-alpha-D-galactosamine = a 3-O-[N-acetyl-alpha-D-galactosaminyl]-L-seryl-[protein] + UDP + H(+). The catalysed reaction is L-threonyl-[protein] + UDP-N-acetyl-alpha-D-galactosamine = a 3-O-[N-acetyl-alpha-D-galactosaminyl]-L-threonyl-[protein] + UDP + H(+). Its pathway is protein modification; protein glycosylation. In terms of biological role, polypeptide N-acetylgalactosaminyltransferase that catalyzes the initiation of protein O-linked glycosylation and is involved in left/right asymmetry by mediating O-glycosylation of NOTCH1. O-glycosylation of NOTCH1 promotes activation of NOTCH1, modulating the balance between motile and immotile (sensory) cilia at the left-right organiser (LRO). Polypeptide N-acetylgalactosaminyltransferases catalyze the transfer of an N-acetyl-D-galactosamine residue to a serine or threonine residue on the protein receptor. In Xenopus tropicalis (Western clawed frog), this protein is Polypeptide N-acetylgalactosaminyltransferase 11 (galnt11).